Reading from the N-terminus, the 44-residue chain is uncharacterized protein (44 aa).

A helical transmembrane segment spans residues 4-24 (ISSILIRGGGVLIVVILLLWI).

The protein localises to the membrane. This is an uncharacterized protein from Ornithodoros (relapsing fever ticks).